A 287-amino-acid polypeptide reads, in one-letter code: Eukaryotic translation initiation factor 3 subunit F (287 aa).

The MPN domain maps to 12-142 (VRVHPVVLFQ…IKAYVCVSLG (131 aa)).

The protein belongs to the eIF-3 subunit F family. Component of the eukaryotic translation initiation factor 3 (eIF-3) complex.

Its subcellular location is the cytoplasm. Component of the eukaryotic translation initiation factor 3 (eIF-3) complex, which is involved in protein synthesis of a specialized repertoire of mRNAs and, together with other initiation factors, stimulates binding of mRNA and methionyl-tRNAi to the 40S ribosome. The eIF-3 complex specifically targets and initiates translation of a subset of mRNAs involved in cell proliferation. This chain is Eukaryotic translation initiation factor 3 subunit F, found in Aedes aegypti (Yellowfever mosquito).